We begin with the raw amino-acid sequence, 227 residues long: Casparian strip membrane protein 2 (227 aa).

The Cytoplasmic segment spans residues 1–59 (MSSTSEATVIHMDGAAGKTPATAVPPPPPPAPTAPVQQQRKAGGVPFLLRSGAEGFRRC). A disordered region spans residues 17-37 (GKTPATAVPPPPPPAPTAPVQ). Pro residues predominate over residues 23–33 (AVPPPPPPAPT). Residues 60–80 (MALLDLLLRVAAMGPTLAAAI) form a helical membrane-spanning segment. The Extracellular segment spans residues 81 to 107 (STGTSDETLSVFTHYFQFRARFDDFSA). A helical membrane pass occupies residues 108 to 128 (FTFFMVANAVAAGYLLMSLPF). Residues 129 to 149 (SAFGVIRPKATSVRLLLLICD) lie on the Cytoplasmic side of the membrane. The helical transmembrane segment at 150-170 (TIMVVLVTAAASAAAAIVYVA) threads the bilayer. The Extracellular segment spans residues 171-197 (HEGNRRANWVPICMQFHGFCKRTSGAV). Residues 198 to 218 (VASFLAVLIFILLVFLGACAI) traverse the membrane as a helical segment. The Cytoplasmic portion of the chain corresponds to 219-227 (RRRHTTTKH).

The protein belongs to the Casparian strip membrane proteins (CASP) family. As to quaternary structure, homodimer and heterodimers.

It is found in the cell membrane. In terms of biological role, regulates membrane-cell wall junctions and localized cell wall deposition. Required for establishment of the Casparian strip membrane domain (CSD) and the subsequent formation of Casparian strips, a cell wall modification of the root endodermis that determines an apoplastic barrier between the intraorganismal apoplasm and the extraorganismal apoplasm and prevents lateral diffusion. In Brachypodium distachyon (Purple false brome), this protein is Casparian strip membrane protein 2.